The sequence spans 520 residues: Cholesterol side-chain cleavage enzyme, mitochondrial (520 aa).

The N-terminal 39 residues, 1 to 39 (MLVRGLPLRSVLVKGCQPLLSAPREGPGHPRVPTGEGAG), are a transit peptide targeting the mitochondrion. Residues 19-47 (LLSAPREGPGHPRVPTGEGAGMSSHSPRP) form a disordered region. Cys-461 provides a ligand contact to heme.

It belongs to the cytochrome P450 family. As to quaternary structure, interacts with FDX1/adrenodoxin. The cofactor is heme.

The protein resides in the mitochondrion inner membrane. It catalyses the reaction 6 reduced [adrenodoxin] + cholesterol + 3 O2 + 6 H(+) = 4-methylpentanal + pregnenolone + 6 oxidized [adrenodoxin] + 4 H2O. The catalysed reaction is 2 reduced [adrenodoxin] + cholesterol + O2 + 2 H(+) = (22R)-hydroxycholesterol + 2 oxidized [adrenodoxin] + H2O. The enzyme catalyses (22R)-hydroxycholesterol + 2 reduced [adrenodoxin] + O2 + 2 H(+) = (20R,22R)-20,22-dihydroxycholesterol + 2 oxidized [adrenodoxin] + H2O. It carries out the reaction (20R,22R)-20,22-dihydroxycholesterol + 2 reduced [adrenodoxin] + O2 + 2 H(+) = 4-methylpentanal + pregnenolone + 2 oxidized [adrenodoxin] + 2 H2O. The protein operates within lipid metabolism; C21-steroid hormone metabolism. It participates in steroid metabolism; cholesterol metabolism. Its function is as follows. A cytochrome P450 monooxygenase that catalyzes the side-chain hydroxylation and cleavage of cholesterol to pregnenolone, the precursor of most steroid hormones. Catalyzes three sequential oxidation reactions of cholesterol, namely the hydroxylation at C22 followed with the hydroxylation at C20 to yield 20R,22R-hydroxycholesterol that is further cleaved between C20 and C22 to yield the C21-steroid pregnenolone and 4-methylpentanal. Mechanistically, uses molecular oxygen inserting one oxygen atom into a substrate and reducing the second into a water molecule. Two electrons are provided by NADPH via a two-protein mitochondrial transfer system comprising flavoprotein FDXR (adrenodoxin/ferredoxin reductase) and nonheme iron-sulfur protein FDX1 or FDX2 (adrenodoxin/ferredoxin). In Equus caballus (Horse), this protein is Cholesterol side-chain cleavage enzyme, mitochondrial (CYP11A1).